A 41-amino-acid polypeptide reads, in one-letter code: Photosystem I reaction center subunit IX (41 aa).

A helical membrane pass occupies residues 7-27 (YLSTAPVVATGWFIVTAALLI).

The protein belongs to the PsaJ family.

The protein localises to the plastid. Its subcellular location is the chloroplast thylakoid membrane. Its function is as follows. May help in the organization of the PsaE and PsaF subunits. This Tetradesmus obliquus (Green alga) protein is Photosystem I reaction center subunit IX.